The sequence spans 425 residues: Histone-binding protein RBBP7 (425 aa).

A2 is subject to N-acetylalanine. S3 is subject to Phosphoserine. An N6-acetyllysine; alternate modification is found at K4. A Glycyl lysine isopeptide (Lys-Gly) (interchain with G-Cter in SUMO2); alternate cross-link involves residue K4. K4 participates in a covalent cross-link: Glycyl lysine isopeptide (Lys-Gly) (interchain with G-Cter in ubiquitin); alternate. Residue T10 is modified to Phosphothreonine. 7 WD repeats span residues 47-122 (QWLP…KINH), 128-173 (RARY…LRLR), 181-217 (GLSWNSNLSGHLLSASDDHTVCLWDINAGPKEGKIVD), 228-269 (VVED…HLVD), 275-312 (VNCLSFNPYSEFILATGSADKTVALWDLRNLKLKLHTF), 318-369 (EIFQ…LFIH), and 376-403 (ISDFSWNPNEPWVICSVSEDNIMQIWQM). S95 is subject to Phosphoserine. A Glycyl lysine isopeptide (Lys-Gly) (interchain with G-Cter in SUMO2) cross-link involves residue K101. N6-acetyllysine is present on K119. Residue K155 forms a Glycyl lysine isopeptide (Lys-Gly) (interchain with G-Cter in SUMO2) linkage. The residue at position 159 (K159) is an N6-acetyllysine; alternate. A Glycyl lysine isopeptide (Lys-Gly) (interchain with G-Cter in SUMO2); alternate cross-link involves residue K159. Phosphoserine is present on S354.

It belongs to the WD repeat RBAP46/RBAP48/MSI1 family. In terms of assembly, binds directly to helix 1 of the histone fold of histone H4, a region that is not accessible when H4 is in chromatin. Subunit of the type B histone acetyltransferase (HAT) complex, composed of RBBP7 and HAT1. Subunit of the core histone deacetylase (HDAC) complex, which is composed of HDAC1, HDAC2, RBBP4 and RBBP7. The core HDAC complex associates with SIN3A, ARID4B/SAP180, SAP18, SAP30, SAP130, SUDS3/SAP45 and possibly ARID4A/RBP1 and ING1 to form the SIN3 HDAC complex. Component of the nucleosome remodeling and deacetylase (NuRD) repressor complex, composed of core proteins MTA1, MTA2, MTA3, RBBP4, RBBP7, HDAC1, HDAC2, MBD2, MBD3, and peripherally associated proteins CDK2AP1, CDK2AP2, GATAD2A, GATAD2B, CHD3, CHD4 and CHD5. The exact stoichiometry of the NuRD complex is unknown, and some subunits such as MBD2 and MBD3, GATAD2A and GATAD2B, and CHD3, CHD4 and CHD5 define mutually exclusive NuRD complexes. The NuRD complex may interact with MBD3L1. The NuRD complex may interact with MBD3L2. Subunit of the PRC2/EED-EZH2 complex, which is composed of at least EED, EZH2, RBBP4, RBBP7 and SUZ12. The PRC2/EED-EZH2 complex may also associate with HDAC1. Component of the NURF-1 ISWI chromatin remodeling complex (also called the nucleosome-remodeling factor (NURF) complex) at least composed of SMARCA1, BPTF, RBBP4 and RBBP7. Within the complex interacts with SMARCA1. Component of the BPFT-SMARCA1 complex at least composed of SMARCA1, BPFT, RBBP4 and RBBP7; the complex is catalytically inactive and does not remodel chromatin. Within the complex interacts with SMARCA1. Interacts with BRCA1. Interacts with CDK2AP1. Interacts with CENPA. Interacts with CHD3. Interacts with CHD4. Interacts with CREBBP, and this interaction may be enhanced by the binding of phosphorylated CREB1 to CREBBP. Interacts with HDAC7. Interacts with MTA1. Interacts with PWWP2B. Interacts with RB1 (via viral protein-binding domain). Interacts with SUV39H1.

Its subcellular location is the nucleus. In terms of biological role, core histone-binding subunit that may target chromatin remodeling factors, histone acetyltransferases and histone deacetylases to their histone substrates in a manner that is regulated by nucleosomal DNA. Component of several complexes which regulate chromatin metabolism. These include the type B histone acetyltransferase (HAT) complex, which is required for chromatin assembly following DNA replication; the core histone deacetylase (HDAC) complex, which promotes histone deacetylation and consequent transcriptional repression; the nucleosome remodeling and histone deacetylase complex (the NuRD complex), which promotes transcriptional repression by histone deacetylation and nucleosome remodeling; and the PRC2/EED-EZH2 complex, which promotes repression of homeotic genes during development; and the NURF (nucleosome remodeling factor) complex. The polypeptide is Histone-binding protein RBBP7 (RBBP7) (Bos taurus (Bovine)).